Here is a 183-residue protein sequence, read N- to C-terminus: Macro domain-containing protein (183 aa).

A Macro domain is found at 1–174 (MKKVHLIQAD…IYKNILSNID (174 aa)).

It belongs to the MacroD-type family.

The protein is Macro domain-containing protein of Acinetobacter sp. (strain ED45-25).